The primary structure comprises 245 residues: 1-(5-phosphoribosyl)-5-[(5-phosphoribosylamino)methylideneamino] imidazole-4-carboxamide isomerase (245 aa).

The active-site Proton acceptor is Asp-7. Catalysis depends on Asp-129, which acts as the Proton donor.

The protein belongs to the HisA/HisF family.

It is found in the cytoplasm. It catalyses the reaction 1-(5-phospho-beta-D-ribosyl)-5-[(5-phospho-beta-D-ribosylamino)methylideneamino]imidazole-4-carboxamide = 5-[(5-phospho-1-deoxy-D-ribulos-1-ylimino)methylamino]-1-(5-phospho-beta-D-ribosyl)imidazole-4-carboxamide. Its pathway is amino-acid biosynthesis; L-histidine biosynthesis; L-histidine from 5-phospho-alpha-D-ribose 1-diphosphate: step 4/9. The polypeptide is 1-(5-phosphoribosyl)-5-[(5-phosphoribosylamino)methylideneamino] imidazole-4-carboxamide isomerase (Escherichia coli O127:H6 (strain E2348/69 / EPEC)).